A 323-amino-acid polypeptide reads, in one-letter code: MKPENKIPVLTRLSDEMKAVVNFQQPGLPPWPADGDIETQRQYYLLERRFWNADAPSMTTRTCAVPTPYGDVTTRLYSPQPTSQATLYYLHGGGFILGNLDTHDRIMRLLARYTGCTVIGIDYSLSPQARYPQAIEETVAVCSYFSQHADEYSLNVEKIGFAGDSAGAMLALASALWLRDKHIRCGNVIAILLWYGLYGLQDSVSRRLFGGAWDGLTREDLDMYEKAYLRNDEDRESPWYCLFNNDLTRDVPPCFIASAEFDPLIDDSRLLHQTLQAHQQPCEYKMYPGTLHAFLHYSRMMTIADDALQDGARFFMARMKTPR.

The Involved in the stabilization of the negatively charged intermediate by the formation of the oxyanion hole motif lies at His91–Gly93. Active-site residues include Ser165, Asp262, and His292.

This sequence belongs to the 'GDXG' lipolytic enzyme family. As to quaternary structure, homodimer. Interacts with MalT and MelA.

It localises to the cytoplasm. Its function is as follows. Displays esterase activity towards short chain fatty esters (acyl chain length of up to 8 carbons). Able to hydrolyze triacetylglycerol (triacetin) and tributyrylglycerol (tributyrin), but not trioleylglycerol (triolein) or cholesterol oleate. Negatively regulates MalT activity by antagonizing maltotriose binding. Inhibits MelA galactosidase activity. This Salmonella paratyphi A (strain ATCC 9150 / SARB42) protein is Acetyl esterase.